The sequence spans 170 residues: Lipoprotein signal peptidase (170 aa).

The next 3 helical transmembrane spans lie at 5-25 (IVGV…KAYA), 62-82 (SNLI…VLFV), and 89-111 (STIC…LRFG). Residues Asp115 and Asp133 contribute to the active site. Residues 126-146 (WPAFNFADVCVTCGVICFLCL) traverse the membrane as a helical segment.

This sequence belongs to the peptidase A8 family.

Its subcellular location is the cell inner membrane. The enzyme catalyses Release of signal peptides from bacterial membrane prolipoproteins. Hydrolyzes -Xaa-Yaa-Zaa-|-(S,diacylglyceryl)Cys-, in which Xaa is hydrophobic (preferably Leu), and Yaa (Ala or Ser) and Zaa (Gly or Ala) have small, neutral side chains.. It functions in the pathway protein modification; lipoprotein biosynthesis (signal peptide cleavage). Functionally, this protein specifically catalyzes the removal of signal peptides from prolipoproteins. The polypeptide is Lipoprotein signal peptidase (Anaplasma marginale (strain Florida)).